A 371-amino-acid polypeptide reads, in one-letter code: MVLANKTTASTRSGAGRNLYWLLLLCLSGVALATDIYSGRIDTPALTIVAPLWTSTLVVTLLGFWAVPMLRSLKASQVIQEDGPQSHLKKAGTPTMGGIFFMPVALVLGWAWVAANSVNLLEVSAAVLLTLCLGLVGWFDDWQILRKKSNKGISAKLRLGIELGSGLIFGLWLFLTRSDISGLALPFGLSLPIGVLFLAISTFVVAAESNAVNLTDGMDGLAAGTSAIAFLGLALVVAPSWPGLMIFCACFSGSCLGFLAHNHNPAQVFMGDTGSLALGGALAAVGLITNTLWALLILSGLFLVESLSVIAQVTYYKATKGPDGVGKRLFKMSPIHHHFEQSGWPEVRVVSTFYACVAVLAVAACGLNALS.

9 helical membrane passes run 19 to 39, 48 to 68, 95 to 115, 119 to 139, 155 to 175, 180 to 200, 227 to 247, 284 to 304, and 349 to 369; these read LYWL…IYSG, IVAP…WAVP, TMGG…WVAA, NLLE…VGWF, AKLR…WLFL, ISGL…FLAI, AIAF…LMIF, AVGL…LFLV, and VVST…GLNA.

This sequence belongs to the glycosyltransferase 4 family. MraY subfamily. The cofactor is Mg(2+).

It is found in the cell inner membrane. The catalysed reaction is UDP-N-acetyl-alpha-D-muramoyl-L-alanyl-gamma-D-glutamyl-meso-2,6-diaminopimeloyl-D-alanyl-D-alanine + di-trans,octa-cis-undecaprenyl phosphate = di-trans,octa-cis-undecaprenyl diphospho-N-acetyl-alpha-D-muramoyl-L-alanyl-D-glutamyl-meso-2,6-diaminopimeloyl-D-alanyl-D-alanine + UMP. The protein operates within cell wall biogenesis; peptidoglycan biosynthesis. Catalyzes the initial step of the lipid cycle reactions in the biosynthesis of the cell wall peptidoglycan: transfers peptidoglycan precursor phospho-MurNAc-pentapeptide from UDP-MurNAc-pentapeptide onto the lipid carrier undecaprenyl phosphate, yielding undecaprenyl-pyrophosphoryl-MurNAc-pentapeptide, known as lipid I. This is Phospho-N-acetylmuramoyl-pentapeptide-transferase from Acaryochloris marina (strain MBIC 11017).